The chain runs to 388 residues: Galactokinase (388 aa).

33-36 (EHTD) provides a ligand contact to substrate. ATP is bound by residues Ser-67 and 124–130 (GAGLSSS). Mg(2+) contacts are provided by Ser-130 and Glu-162. Asp-174 functions as the Proton acceptor in the catalytic mechanism. Tyr-224 lines the substrate pocket.

The protein belongs to the GHMP kinase family. GalK subfamily.

The protein localises to the cytoplasm. It catalyses the reaction alpha-D-galactose + ATP = alpha-D-galactose 1-phosphate + ADP + H(+). The protein operates within carbohydrate metabolism; galactose metabolism. Functionally, catalyzes the transfer of the gamma-phosphate of ATP to D-galactose to form alpha-D-galactose-1-phosphate (Gal-1-P). This chain is Galactokinase, found in Lacticaseibacillus paracasei (strain ATCC 334 / BCRC 17002 / CCUG 31169 / CIP 107868 / KCTC 3260 / NRRL B-441) (Lactobacillus paracasei).